A 290-amino-acid polypeptide reads, in one-letter code: MRIFAVFIFMTYWHLLNAFTVTVPKDLYVVEYGSNMTIECKFPVEKQLDLAALIVYWEMEDKNIIQFVHGEEDLKVQHSSYRQRARLLKDQLSLGNAALQITDVKLQDAGVYRCMISYGGADYKRITVKVNAPYNKINQRILVVDPVTSEHELTCQAEGYPKAEVIWTSSDHQVLSGKTTTTNSKREEKLFNVTSTLRINTTTNEIFYCTFRRLDPEENHTAELVIPELPLAHPPNERTHLVILGAILLCLGVALTFIFRLRKGRMMDVKKCGIQDTNSKKQSDTHLEET.

A signal peptide spans 1-18; that stretch reads MRIFAVFIFMTYWHLLNA. In terms of domain architecture, Ig-like V-type spans 19–127; the sequence is FTVTVPKDLY…YGGADYKRIT (109 aa). Residues 19–238 are Extracellular-facing; the sequence is FTVTVPKDLY…LPLAHPPNER (220 aa). N35 carries N-linked (GlcNAc...) asparagine glycosylation. 2 disulfides stabilise this stretch: C40–C114 and C155–C209. An Ig-like C2-type domain is found at 133–225; it reads PYNKINQRIL…PEENHTAELV (93 aa). Residues N192, N200, and N219 are each glycosylated (N-linked (GlcNAc...) asparagine). The helical transmembrane segment at 239-259 threads the bilayer; the sequence is THLVILGAILLCLGVALTFIF. Over 260–290 the chain is Cytoplasmic; that stretch reads RLRKGRMMDVKKCGIQDTNSKKQSDTHLEET.

The protein belongs to the immunoglobulin superfamily. BTN/MOG family. Interacts with PDCD1. Interacts (via transmembrane domain) with CMTM4 and CMTM6. Interacts with (phosphorylated) STAT3; promoting nuclear translocation. Interacts with CD80. In terms of assembly, may form homomultimers. Post-translationally, ubiquitinated; STUB1 likely mediates polyubiquitination of PD-L1/CD274 triggering its degradation. Ubiquitinated by MARCHF8; leading to degradation. Deubiquitinated by USP22; leading to stabilization. Highly expressed in the heart, skeletal muscle, placenta and lung. Weakly expressed in the thymus, spleen, kidney and liver. Expressed on activated T- and B-cells, dendritic cells, keratinocytes and monocytes. As to expression, widely expressed, highest in lung, liver and pituitary and in various peripheral blood cells, including neutrophils and some subtypes of lymphoid and myeloid cells.

The protein resides in the cell membrane. It localises to the early endosome membrane. It is found in the recycling endosome membrane. Its subcellular location is the nucleus. The protein localises to the endomembrane system. The protein resides in the secreted. Plays a critical role in induction and maintenance of immune tolerance to self. As a ligand for the inhibitory receptor PDCD1/PD-1, modulates the activation threshold of T-cells and limits T-cell effector response. Through a yet unknown activating receptor, may costimulate T-cell subsets that predominantly produce interleukin-10 (IL10). Can also act as a transcription coactivator: in response to hypoxia, translocates into the nucleus via its interaction with phosphorylated STAT3 and promotes transcription of GSDMC, leading to pyroptosis. Its function is as follows. The PDCD1-mediated inhibitory pathway is exploited by tumors to attenuate anti-tumor immunity and escape destruction by the immune system, thereby facilitating tumor survival. The interaction with PDCD1/PD-1 inhibits cytotoxic T lymphocytes (CTLs) effector function. The blockage of the PDCD1-mediated pathway results in the reversal of the exhausted T-cell phenotype and the normalization of the anti-tumor response, providing a rationale for cancer immunotherapy. This chain is Programmed cell death 1 ligand 1, found in Homo sapiens (Human).